We begin with the raw amino-acid sequence, 111 residues long: Large ribosomal subunit protein eL33z (111 aa).

It belongs to the eukaryotic ribosomal protein eL33 family.

The chain is Large ribosomal subunit protein eL33z (RPL35AB) from Arabidopsis thaliana (Mouse-ear cress).